A 172-amino-acid chain; its full sequence is Monopolar attachment protein 1 (172 aa).

The segment covering 15-30 has biased composition (basic residues); the sequence is KKNKNPKISNSKKKNS. Residues 15-43 form a disordered region; that stretch reads KKNKNPKISNSKKKNSTRPALQDKTNQTL. Residues 31–43 show a composition bias toward polar residues; it reads TRPALQDKTNQTL. The POLO box domain (PBD)-binding motif lies at 100 to 102; it reads STP.

Interacts with rec8, Interacts with plo1.

The protein resides in the nucleus. It localises to the chromosome. The protein localises to the centromere. Its subcellular location is the kinetochore. Plays an important role in chromosome segregation during meiosis I by allowing meiotic rec8 to establish cohesion at the centromeric central core and thereby promote the side-by-side structure of kinetochores at meiosis I. Enables monopolar attachment during meiosis I. Required to facilitate kinetochore mono-orientation during meiosis I, when kinetochores on sister chromosomes face the same direction and are thus captured and pulled by spindle fibers from the same pole. Acts in collaboration with plo1. This is Monopolar attachment protein 1 (moa1) from Schizosaccharomyces pombe (strain 972 / ATCC 24843) (Fission yeast).